A 198-amino-acid chain; its full sequence is Imidazoleglycerol-phosphate dehydratase (198 aa).

This sequence belongs to the imidazoleglycerol-phosphate dehydratase family.

Its subcellular location is the cytoplasm. It carries out the reaction D-erythro-1-(imidazol-4-yl)glycerol 3-phosphate = 3-(imidazol-4-yl)-2-oxopropyl phosphate + H2O. The protein operates within amino-acid biosynthesis; L-histidine biosynthesis; L-histidine from 5-phospho-alpha-D-ribose 1-diphosphate: step 6/9. In Gluconacetobacter diazotrophicus (strain ATCC 49037 / DSM 5601 / CCUG 37298 / CIP 103539 / LMG 7603 / PAl5), this protein is Imidazoleglycerol-phosphate dehydratase.